We begin with the raw amino-acid sequence, 974 residues long: Valine--tRNA ligase, chloroplastic/mitochondrial 2 (974 aa).

Positions 109–119 (PNVTGSLHMGH) match the 'HIGH' region motif. One copy of the LRR 1 repeat lies at 432–454 (LAEKALLAVENKELTIIPERFEK). A coiled-coil region spans residues 489–518 (EEDYIVAKSAEEALEKALEKYGKDVEIYQD). The 'KMSKS' region motif lies at 598–602 (KMSKS). Lys601 provides a ligand contact to ATP. The LRR 2 repeat unit spans residues 857-880 (LALLSRLDLNNVHFSNAPPGDANL).

It belongs to the class-I aminoacyl-tRNA synthetase family.

The protein localises to the plastid. The protein resides in the chloroplast. It localises to the mitochondrion. The catalysed reaction is tRNA(Val) + L-valine + ATP = L-valyl-tRNA(Val) + AMP + diphosphate. The sequence is that of Valine--tRNA ligase, chloroplastic/mitochondrial 2 from Arabidopsis thaliana (Mouse-ear cress).